We begin with the raw amino-acid sequence, 159 residues long: Cyclic pyranopterin monophosphate synthase (159 aa).

Substrate is bound by residues 75 to 77 (LCH) and 113 to 114 (ME). The active site involves Asp-128.

The protein belongs to the MoaC family. Homohexamer; trimer of dimers.

The catalysed reaction is (8S)-3',8-cyclo-7,8-dihydroguanosine 5'-triphosphate = cyclic pyranopterin phosphate + diphosphate. It participates in cofactor biosynthesis; molybdopterin biosynthesis. In terms of biological role, catalyzes the conversion of (8S)-3',8-cyclo-7,8-dihydroguanosine 5'-triphosphate to cyclic pyranopterin monophosphate (cPMP). This is Cyclic pyranopterin monophosphate synthase from Vibrio atlanticus (strain LGP32) (Vibrio splendidus (strain Mel32)).